We begin with the raw amino-acid sequence, 321 residues long: 6-phosphogluconolactonase-like protein 1 (321 aa).

Residues 36–85 (GKVSRSTQMSGTSLNGNGNTESKTMERVNSVRSNASSRGGSEDGATKKLK) form a disordered region. A compositionally biased stretch (polar residues) spans 39 to 57 (SRSTQMSGTSLNGNGNTES). Residues 63–74 (VNSVRSNASSRG) are compositionally biased toward low complexity. Serine 65 and serine 68 each carry phosphoserine. Residues 75 to 85 (GSEDGATKKLK) are compositionally biased toward basic and acidic residues. Position 320 is a phosphothreonine (threonine 320).

The protein belongs to the glucosamine/galactosamine-6-phosphate isomerase family. 6-phosphogluconolactonase subfamily.

The protein resides in the cytoplasm. It is found in the nucleus. Functionally, may be involved in regulation of tRNA subcellular distribution. In Saccharomyces cerevisiae (strain ATCC 204508 / S288c) (Baker's yeast), this protein is 6-phosphogluconolactonase-like protein 1 (SOL1).